Consider the following 420-residue polypeptide: Glyceraldehyde-3-phosphate dehydrogenase GAPCP2, chloroplastic (420 aa).

The transit peptide at 1–66 directs the protein to the chloroplast; that stretch reads MALSSLLRSA…YNAKRVQPIK (66 aa). NAD(+) is bound by residues 94-95, aspartate 116, and arginine 162; that span reads RI. D-glyceraldehyde 3-phosphate-binding positions include 233–235, threonine 264, 293–294, and arginine 316; these read SCT and TG. Cysteine 234 acts as the Nucleophile in catalysis. Asparagine 398 is a binding site for NAD(+).

The protein belongs to the glyceraldehyde-3-phosphate dehydrogenase family. In terms of assembly, homotetramer. Expressed in shoot and root vasculature, leaf veins and vascular tissue of flowers and siliques.

It localises to the plastid. It is found in the chloroplast stroma. The enzyme catalyses D-glyceraldehyde 3-phosphate + phosphate + NAD(+) = (2R)-3-phospho-glyceroyl phosphate + NADH + H(+). Functionally, involved in plastidial glycolytic pathway and plays a specific role in glycolytic energy production in non-green plastids and chloroplasts. Essential for breakdown of starch to form sucrose for export to non-photosynthetic tissues, and to generate primary metabolites for anabolic pathways such as fatty acid and amino acid synthesis. Plays an important role in plant development by providing substrates for the phosphorylated pathway of serine biosynthesis in roots. Plays a crucial role in pollen development. Functionally redundant with GAPCP1. The protein is Glyceraldehyde-3-phosphate dehydrogenase GAPCP2, chloroplastic (GAPCP2) of Arabidopsis thaliana (Mouse-ear cress).